Here is a 350-residue protein sequence, read N- to C-terminus: MQFVASEHPHRRLNPLNGQWVLVCPHRTQRPWSGQQEKAQKNELPEFDPTNPLCPGVTRPNGIQTPEYESTYVFENDFPALVEVVPVPPNNDDPLFQIAPARGNCRVMCFHPKSNLTLPTMSAAEIVVVIDEWISQFNELSAKYAWVQIFENKGAAMGCSNPHPHCQIWSCSFLPTEPQLKQERLRAYYATNERPMLADYVERELQRQERIVIENRDWLVVVPFWATWPFETMLISRNNNKRINDLTAEQRYNLALTIKELTTKYDNLFQCSFPYSMGWHGAPTGPEHAHASSAHWTLHAIYYPPLLRSASVRKFMVGFELLAMAQRDLTPEQAAQRLREVDGKCHYLEK.

Residues 31–52 are disordered; sequence PWSGQQEKAQKNELPEFDPTNP. Zn(2+) is bound at residue Cys-54. Residues 76 to 77 and Asn-152 contribute to the UDP-alpha-D-glucose site; that span reads ND. His-163 contacts Zn(2+). His-165 serves as the catalytic Tele-UMP-histidine intermediate. Residues Gln-167, 314-317, and 319-320 each bind UDP-alpha-D-glucose; these read KFMV and FE.

This sequence belongs to the galactose-1-phosphate uridylyltransferase type 1 family. Homodimer. It depends on Zn(2+) as a cofactor.

The catalysed reaction is alpha-D-galactose 1-phosphate + UDP-alpha-D-glucose = alpha-D-glucose 1-phosphate + UDP-alpha-D-galactose. It participates in carbohydrate metabolism; galactose metabolism. The polypeptide is Probable galactose-1-phosphate uridylyltransferase (Galt) (Drosophila melanogaster (Fruit fly)).